The primary structure comprises 862 residues: Cytosolic carboxypeptidase 2 (862 aa).

Residues 359–629 (YPYTYTDLQC…HVCDTLLDFC (271 aa)) form the Peptidase M14 domain. Positions 425, 428, and 521 each coordinate Zn(2+). The active-site Proton donor/acceptor is the Glu593. 3 disordered regions span residues 669-692 (SDIP…DGPP), 704-728 (NQKT…EQYQ), and 750-836 (STLQ…PNWS). Residues 674–689 (SDIESSTSGSDSSLSD) are compositionally biased toward low complexity. The span at 711-721 (NPKKKRLQTRK) shows a compositional bias: basic residues. Residues 813-825 (ASCSPKRSTNSSL) are compositionally biased toward polar residues.

The protein belongs to the peptidase M14 family. In terms of assembly, interacts with RARRES1, KIF11 and MAPRE1. Zn(2+) serves as cofactor. In terms of tissue distribution, widely expressed. Expressed in tissues with motile cilia such as testis, lung and trachea. Also detected in brain, eye, muscle, pancreas, intestine, stomach, pituitary, spleen, adrenal and kidney. Expressed in mitral and granular cells in brain.

The protein resides in the cytoplasm. It localises to the cytosol. The protein localises to the cytoskeleton. Its subcellular location is the microtubule organizing center. It is found in the centrosome. The protein resides in the centriole. It localises to the cilium basal body. It carries out the reaction (L-glutamyl)(n+1)-gamma-L-glutamyl-L-glutamyl-[protein] + H2O = (L-glutamyl)(n)-gamma-L-glutamyl-L-glutamyl-[protein] + L-glutamate. Inhibited by RARRES1. Its function is as follows. Metallocarboxypeptidase that mediates deglutamylation of tubulin and non-tubulin target proteins. Catalyzes the removal of polyglutamate side chains present on the gamma-carboxyl group of glutamate residues within the C-terminal tail of tubulin protein. Specifically cleaves tubulin long-side-chains, while it is not able to remove the branching point glutamate. Also catalyzes the removal of polyglutamate residues from the carboxy-terminus of non-tubulin proteins such as MYLK. The protein is Cytosolic carboxypeptidase 2 of Mus musculus (Mouse).